The chain runs to 182 residues: Ribosome-recycling factor (182 aa).

Residues 137–158 are disordered; that stretch reads KKSEKESEISEDQSRDEQDNVQ.

It belongs to the RRF family.

The protein resides in the cytoplasm. Functionally, responsible for the release of ribosomes from messenger RNA at the termination of protein biosynthesis. May increase the efficiency of translation by recycling ribosomes from one round of translation to another. The protein is Ribosome-recycling factor of Prochlorococcus marinus (strain MIT 9211).